Reading from the N-terminus, the 529-residue chain is MLKREDLIAPVQYNLVNEMEKFSAAGQKTALLWEDESGKQESWSYEKLMEETNKIGAALADLGFKKGDKLIVMVPRVLEAYAVYLAILKSGMVVIPCSEMLRAKDLEYRIEHAEVKGAIVYSEFIGAFRDVSTADKLITLSIGENDAGWKNLLSIEADGSQFKTADTTRDDMAFLSYTSGTTGQPKGVVHTHGWAFAHLKTSAGAWLDISEKDIVWATAAPGWQKWVWSPFLAVLGSGATGFVYHGRFKAEKYLELLNRYKINVFCCTPTEYRLMAKVEGLKRFDLSALHSAVSAGEPLNREVIDVFQKHFGIKVRDGYGQTESTLLVGVLKDTPIKPGSMGKPTPGNQVEIINEDGEICKPGEVGDIAVHLSTPALFKEYFKDPERMKTQIRGDYFLTGDRARKDEEGYFWFESRNDDIIISSGYTIGPFEVEDALVKHPEVKECAVVASPDEIRGSIVKAYVVLQNHEKRSDELVKMLQNHVKTITAPYKYPREIEFVESLPKTASAKIRRVELRKREEQLKANKKA.

ATP contacts are provided by residues T178–K186, D401, R416, and K510.

This sequence belongs to the ATP-dependent AMP-binding enzyme family.

This is an uncharacterized protein from Bacillus subtilis (strain 168).